We begin with the raw amino-acid sequence, 204 residues long: uncharacterized protein (204 aa).

A helical membrane pass occupies residues 63-83; the sequence is SLLLSMVASVTAAGGNAAIVG.

It localises to the membrane. This is an uncharacterized protein from Mycobacterium tuberculosis (strain ATCC 25618 / H37Rv).